The sequence spans 145 residues: Endoribonuclease YbeY (145 aa).

Zn(2+)-binding residues include His-109, His-113, and His-119.

Belongs to the endoribonuclease YbeY family. It depends on Zn(2+) as a cofactor.

The protein resides in the cytoplasm. Single strand-specific metallo-endoribonuclease involved in late-stage 70S ribosome quality control and in maturation of the 3' terminus of the 16S rRNA. The protein is Endoribonuclease YbeY of Ruthia magnifica subsp. Calyptogena magnifica.